A 287-amino-acid chain; its full sequence is MPLLKLVFLGTGGAVPKADRMLPAIYLEDWLGHRVLLDAGEGAQYRLLQVGVSPASLTLVAVTHGHEDHVLGLPGLVITSRFLGGKVRVLAPRSMHKALERLGVEVLEGYAAERLKITCVEVCHTVDACGWLFEWDVGYKLDLQKATGLPKWALTSLIKGHPVEVEGRVIRPEDVADPAHRRFKRLLYTGDTGPCPRMWETVGEVDVLIHEATFADDVESQKAHEEGHSTFADALEAARALRAKVLILTHISARYPDKSRHRQLAAQVTPPPHVYVPDDFDTLLVQL.

The Zn(2+) site is built by His-64, His-66, Asp-68, His-69, His-124, Asp-191, and His-250. Asp-68 acts as the Proton acceptor in catalysis.

Belongs to the RNase Z family. Homodimer. Requires Zn(2+) as cofactor.

The catalysed reaction is Endonucleolytic cleavage of RNA, removing extra 3' nucleotides from tRNA precursor, generating 3' termini of tRNAs. A 3'-hydroxy group is left at the tRNA terminus and a 5'-phosphoryl group is left at the trailer molecule.. Functionally, zinc phosphodiesterase, which displays some tRNA 3'-processing endonuclease activity. Probably involved in tRNA maturation, by removing a 3'-trailer from precursor tRNA. The protein is Ribonuclease Z of Pyrobaculum calidifontis (strain DSM 21063 / JCM 11548 / VA1).